The chain runs to 62 residues: MRCLQVFIIFLLLIPSPPSVDAQRKTKDDVPLASFHDNAKRTLKRLWNKRSCCPREFLCCLR.

An N-terminal signal peptide occupies residues 1–22 (MRCLQVFIIFLLLIPSPPSVDA). A propeptide spanning residues 23–48 (QRKTKDDVPLASFHDNAKRTLKRLWN) is cleaved from the precursor.

This sequence belongs to the conotoxin T superfamily. Post-translationally, contains 2 disulfide bonds that can be either 'C1-C3, C2-C4' or 'C1-C4, C2-C3', since these disulfide connectivities have been observed for conotoxins with cysteine framework V (for examples, see AC P0DQQ7 and AC P81755). In terms of tissue distribution, expressed by the venom duct.

It localises to the secreted. The sequence is that of Conotoxin Lt5.5 from Conus litteratus (Lettered cone).